A 500-amino-acid polypeptide reads, in one-letter code: Cysteine-rich secretory protein LCCL domain-containing 1 (500 aa).

A signal peptide spans 1–23 (MKCTAREWLRVTTVLFMARAIPA). The region spanning 66–206 (LDLHNKLRSQ…PKAVYLVCNY (141 aa)) is the SCP domain. A compositionally biased stretch (basic and acidic residues) spans 254-280 (EETNEIERQQSQVHDTHVRTRSDDSSR). Positions 254–281 (EETNEIERQQSQVHDTHVRTRSDDSSRN) are disordered. LCCL domains are found at residues 289-384 (MSQI…ANSF) and 390-492 (TVQA…PGGK). Intrachain disulfides connect Cys-295-Cys-313, Cys-317-Cys-337, Cys-396-Cys-418, and Cys-422-Cys-445.

Belongs to the CRISP family.

It localises to the secreted. In Homo sapiens (Human), this protein is Cysteine-rich secretory protein LCCL domain-containing 1 (CRISPLD1).